A 753-amino-acid polypeptide reads, in one-letter code: 5-methyltetrahydropteroyltriglutamate--homocysteine methyltransferase (753 aa).

5-methyltetrahydropteroyltri-L-glutamate-binding positions include 17–20 (RELK) and Lys-117. L-homocysteine contacts are provided by residues 431 to 433 (IGS) and Glu-484. Residues 431-433 (IGS) and Glu-484 each bind L-methionine. 5-methyltetrahydropteroyltri-L-glutamate contacts are provided by residues 515 to 516 (RC) and Trp-561. Asp-599 lines the L-homocysteine pocket. L-methionine is bound at residue Asp-599. Residue Glu-605 coordinates 5-methyltetrahydropteroyltri-L-glutamate. Residues His-641, Cys-643, and Glu-665 each coordinate Zn(2+). Residue His-694 is the Proton donor of the active site. A Zn(2+)-binding site is contributed by Cys-726.

It belongs to the vitamin-B12 independent methionine synthase family. Zn(2+) is required as a cofactor.

It carries out the reaction 5-methyltetrahydropteroyltri-L-glutamate + L-homocysteine = tetrahydropteroyltri-L-glutamate + L-methionine. It participates in amino-acid biosynthesis; L-methionine biosynthesis via de novo pathway; L-methionine from L-homocysteine (MetE route): step 1/1. Functionally, catalyzes the transfer of a methyl group from 5-methyltetrahydrofolate to homocysteine resulting in methionine formation. This chain is 5-methyltetrahydropteroyltriglutamate--homocysteine methyltransferase, found in Escherichia coli O9:H4 (strain HS).